The sequence spans 128 residues: Fluoride-specific ion channel FluC (128 aa).

4 helical membrane-spanning segments follow: residues 5–25 (IVAIFVGAGLGALLRWFLSIG), 35–55 (LGTLASNLIGGYLIGIAVVAF), 67–87 (LFVITGFMGGLTTFSTYSVEV), and 96–116 (FGWALAVAALHLIGSFTLTGL). The Na(+) site is built by G75 and T78.

It belongs to the fluoride channel Fluc/FEX (TC 1.A.43) family.

It localises to the cell inner membrane. The catalysed reaction is fluoride(in) = fluoride(out). Its activity is regulated as follows. Na(+) is not transported, but it plays an essential structural role and its presence is essential for fluoride channel function. Functionally, fluoride-specific ion channel. Important for reducing fluoride concentration in the cell, thus reducing its toxicity. In Burkholderia pseudomallei (strain 1106a), this protein is Fluoride-specific ion channel FluC.